Reading from the N-terminus, the 430-residue chain is tRNA(Ile)-lysidine synthase (430 aa).

27–32 contributes to the ATP binding site; sequence SGGSDS.

It belongs to the tRNA(Ile)-lysidine synthase family.

The protein resides in the cytoplasm. It carries out the reaction cytidine(34) in tRNA(Ile2) + L-lysine + ATP = lysidine(34) in tRNA(Ile2) + AMP + diphosphate + H(+). Ligates lysine onto the cytidine present at position 34 of the AUA codon-specific tRNA(Ile) that contains the anticodon CAU, in an ATP-dependent manner. Cytidine is converted to lysidine, thus changing the amino acid specificity of the tRNA from methionine to isoleucine. The protein is tRNA(Ile)-lysidine synthase of Rickettsia akari (strain Hartford).